The following is a 442-amino-acid chain: MITPKVLSGFKDRLPKDAIQKAQLLAKVSVVFQSFGFVPIETPHLEYAQTLLPDASSDIQKEIYRFKDHGDRDVALRFDLTVPLARFVSLHHQILGMPFKRYAIGNVFRGERAQKGRYREFTQCDFDFIGSESLVCDAEIIQVIIASLKALDLEDFCVSINHRKILNGICEYFGIAQVNEVLRIVDKLEKIGLNGVEEELKKECDLDSNTIKDLLEMVQIKQNDLSHAEFFEKIAYLKDYNENLKKGIQDLERLYQLLGDLQISQNLYKIDFSIARGLGYYTGIVYETTLNDMKSLGSVCSGGRYDHLTKNFSKENLQGVGASIGIDRLIVALSEMQLLDERSTQAKVLIACMHEEYFSYANRLAESLRQSGIFSEVYPEAQKIKKPFSYANHKGHEFVAVIGEEEFKSETLSLKNMHSGMQLNCLSFLKALEIIGENDEDL.

This sequence belongs to the class-II aminoacyl-tRNA synthetase family. In terms of assembly, homodimer.

Its subcellular location is the cytoplasm. The enzyme catalyses tRNA(His) + L-histidine + ATP = L-histidyl-tRNA(His) + AMP + diphosphate + H(+). This Helicobacter pylori (strain J99 / ATCC 700824) (Campylobacter pylori J99) protein is Histidine--tRNA ligase (hisS).